The sequence spans 884 residues: Nonsense-mediated mRNA decay factor EBS1 (884 aa).

2 disordered regions span residues 596–645 and 755–774; these read NSMK…PTMG and QGGLYSSQQPSSMSSLNSAY. Residues 633–645 are compositionally biased toward polar residues; it reads RSSSLDSFSPTMG. The span at 760–772 shows a compositional bias: low complexity; sequence SSQQPSSMSSLNS.

The protein belongs to the EST1 family. Interacts with NMD helicase UPF1. Interacts with CDC33.

The protein localises to the nucleus. It is found in the chromosome. Its subcellular location is the telomere. The protein resides in the cytoplasm. It localises to the P-body. Its function is as follows. Plays a role in nonsense-mediated mRNA decay (NMD). Recruits UPF1 to cytoplasmic mRNA decay bodies (P-bodies). Negative regulator of gene expression. Inhibits translation most likely through effects on eIF-4E (CDC33). Involved in telomere maintenance. In Saccharomyces cerevisiae (strain ATCC 204508 / S288c) (Baker's yeast), this protein is Nonsense-mediated mRNA decay factor EBS1.